Reading from the N-terminus, the 130-residue chain is P antigen family member 5 (130 aa).

2 disordered regions span residues 1–88 (MQAP…TDVE) and 101–130 (DAPGDGPDVREGTLPTFDPTKVLEAGEGQL). Residues 14–26 (TREEVRDMSEHVT) show a composition bias toward basic and acidic residues. Residues 27–42 (RSQSSERGNDQESSQP) are compositionally biased toward polar residues. Residues Thr113 and Thr116 each carry the phosphothreonine modification.

It belongs to the GAGE family.

The protein is P antigen family member 5 (PAGE5) of Homo sapiens (Human).